The following is a 732-amino-acid chain: Glycine--tRNA ligase (732 aa).

Residues 1–27 (MRHVLSLVYKCSVFSKQVTVFSNHLRL) constitute a mitochondrion transit peptide. One can recognise a WHEP-TRS domain in the interval 61-117 (ILAPLRANVKEQGDLVRKLKEEKAPEIDIKKAVAELKTRKKILEDKELSLAPAEDLF). Position 297 (Glu-297) interacts with glycine. ATP contacts are provided by residues 329–331 (RNE) and 340–341 (RV). Position 348 (Glu-348) interacts with glycine. 453–454 (EC) lines the ATP pocket. 572–574 (EPS) is a glycine binding site. Residue Arg-579 coordinates ATP.

Belongs to the class-II aminoacyl-tRNA synthetase family. Homodimer.

It localises to the mitochondrion. The protein localises to the cytoplasm. It is found in the cell projection. The protein resides in the axon. It carries out the reaction tRNA(Gly) + glycine + ATP = glycyl-tRNA(Gly) + AMP + diphosphate. The enzyme catalyses 2 ATP + H(+) = P(1),P(4)-bis(5'-adenosyl) tetraphosphate + diphosphate. Functionally, catalyzes the ATP-dependent ligation of glycine to the 3'-end of its cognate tRNA, via the formation of an aminoacyl-adenylate intermediate (Gly-AMP). Also produces diadenosine tetraphosphate (Ap4A), a universal pleiotropic signaling molecule needed for cell regulation pathways, by direct condensation of 2 ATPs. Thereby, may play a special role in Ap4A homeostasis. Required for terminal arborization of both dendrites and axons during development. The chain is Glycine--tRNA ligase from Bombyx mori (Silk moth).